Here is a 481-residue protein sequence, read N- to C-terminus: Ribosomal protein uS12 methylthiotransferase RimO (481 aa).

The MTTase N-terminal domain maps to 8-124 (MTVHLVSMGC…IAGRLRTILD (117 aa)). C17, C53, and C87 together coordinate [4Fe-4S] cluster. The interval 148–188 (PTARAEVSVPGHGTAPDLSASVTPDSGPRATRRRLGTGPSA) is disordered. The Radical SAM core domain maps to 182–413 (LGTGPSAPLK…DLTDELVSQR (232 aa)). Residues C196, C200, and C203 each coordinate [4Fe-4S] cluster. One can recognise a TRAM domain in the interval 415–480 (EDRIGTRGRV…GVDLVARPAN (66 aa)).

Belongs to the methylthiotransferase family. RimO subfamily. [4Fe-4S] cluster serves as cofactor.

It localises to the cytoplasm. The catalysed reaction is L-aspartate(89)-[ribosomal protein uS12]-hydrogen + (sulfur carrier)-SH + AH2 + 2 S-adenosyl-L-methionine = 3-methylsulfanyl-L-aspartate(89)-[ribosomal protein uS12]-hydrogen + (sulfur carrier)-H + 5'-deoxyadenosine + L-methionine + A + S-adenosyl-L-homocysteine + 2 H(+). Functionally, catalyzes the methylthiolation of an aspartic acid residue of ribosomal protein uS12. This chain is Ribosomal protein uS12 methylthiotransferase RimO, found in Cutibacterium acnes (strain DSM 16379 / KPA171202) (Propionibacterium acnes).